Here is a 602-residue protein sequence, read N- to C-terminus: DEAD-box ATP-dependent RNA helicase 53 (602 aa).

The segment covering 33–43 has biased composition (low complexity); that stretch reads ASPLDPCRGPA. Positions 33 to 76 are disordered; that stretch reads ASPLDPCRGPAAPEPPRRRAFHGSPSPLGFRSTPASWSSPEAGA. The Q motif motif lies at 84 to 112; that stretch reads LEVARLGISPWIVERLAARGITRLFPIQR. In terms of domain architecture, Helicase ATP-binding spans 115-288; that stretch reads LDPAMQGKDM…SKYLKDPIII (174 aa). 128-135 contributes to the ATP binding site; it reads ARTGTGKT. The DEAD box motif lies at 236–239; the sequence is DEAD. A Helicase C-terminal domain is found at 317–462; it reads ILGPLIKEHA…LPKIEVADEA (146 aa). The segment at 503 to 602 is disordered; that stretch reads FGDFDGFGSS…GRSGGFDDSN (100 aa).

It belongs to the DEAD box helicase family. DDX21/DDX50 subfamily.

It carries out the reaction ATP + H2O = ADP + phosphate + H(+). In Oryza sativa subsp. japonica (Rice), this protein is DEAD-box ATP-dependent RNA helicase 53.